A 181-amino-acid chain; its full sequence is Dual-action ribosomal maturation protein DarP (181 aa).

This sequence belongs to the DarP family.

It is found in the cytoplasm. Member of a network of 50S ribosomal subunit biogenesis factors which assembles along the 30S-50S interface, preventing incorrect 23S rRNA structures from forming. Promotes peptidyl transferase center (PTC) maturation. The sequence is that of Dual-action ribosomal maturation protein DarP from Actinobacillus succinogenes (strain ATCC 55618 / DSM 22257 / CCUG 43843 / 130Z).